A 259-amino-acid polypeptide reads, in one-letter code: MILVIDVGNTNCTVGVYKEQKLLRHWRMTTDRHRTSDELGMTVLNFFSYANLTPSDIQGIIISSVVPPIMHAMETMCVRYFNIRPLIVGPGIKTGLNLKVDNPREIGSDRIVNAVAASEEYGTPVIVVDFGTATTFCYIDEAGVYQGGAIAPGIMISTEALYNRAAKLPRVDIAESSQIIGKSTVASMQAGIFYGFIGQCEGIIAEMKKQSNTSPVVVATGGLARMITEKSSAVDILDPFLTLKGLELLYRRNKPTTEK.

6–13 (DVGNTNCT) serves as a coordination point for ATP. 107–110 (GSDR) contacts substrate. Aspartate 109 acts as the Proton acceptor in catalysis. Aspartate 129 serves as a coordination point for K(+). Threonine 132 is an ATP binding site. A substrate-binding site is contributed by threonine 184.

This sequence belongs to the type III pantothenate kinase family. Homodimer. NH4(+) is required as a cofactor. Requires K(+) as cofactor.

It is found in the cytoplasm. It carries out the reaction (R)-pantothenate + ATP = (R)-4'-phosphopantothenate + ADP + H(+). It functions in the pathway cofactor biosynthesis; coenzyme A biosynthesis; CoA from (R)-pantothenate: step 1/5. Its function is as follows. Catalyzes the phosphorylation of pantothenate (Pan), the first step in CoA biosynthesis. This is Type III pantothenate kinase from Listeria innocua serovar 6a (strain ATCC BAA-680 / CLIP 11262).